The primary structure comprises 161 residues: Urease accessory protein UreE (161 aa).

The protein belongs to the UreE family.

Its subcellular location is the cytoplasm. In terms of biological role, involved in urease metallocenter assembly. Binds nickel. Probably functions as a nickel donor during metallocenter assembly. The polypeptide is Urease accessory protein UreE (Pseudarthrobacter chlorophenolicus (strain ATCC 700700 / DSM 12829 / CIP 107037 / JCM 12360 / KCTC 9906 / NCIMB 13794 / A6) (Arthrobacter chlorophenolicus)).